We begin with the raw amino-acid sequence, 307 residues long: UDP-N-acetylenolpyruvoylglucosamine reductase (307 aa).

An FAD-binding PCMH-type domain is found at 34-198; sequence TGGNADFYLS…LEAAFTLEPG (165 aa). Residue Arg177 is part of the active site. Ser227 serves as the catalytic Proton donor. Glu297 is a catalytic residue.

This sequence belongs to the MurB family. It depends on FAD as a cofactor.

It localises to the cytoplasm. It carries out the reaction UDP-N-acetyl-alpha-D-muramate + NADP(+) = UDP-N-acetyl-3-O-(1-carboxyvinyl)-alpha-D-glucosamine + NADPH + H(+). It functions in the pathway cell wall biogenesis; peptidoglycan biosynthesis. Functionally, cell wall formation. The sequence is that of UDP-N-acetylenolpyruvoylglucosamine reductase from Staphylococcus haemolyticus (strain JCSC1435).